A 166-amino-acid chain; its full sequence is MAINLEDKKAIVAEVNEAAKVALSAVVVDARGVTVGAMTGLRKEAREAGVYVRVVRNTLLKRAVAGTSYEVLNDAFTGPTLIAFSNEHPGAAARLFKEFAKGQDKFEIKAASFEGKFLAANEIDVLASLPTRDEAIAKLMSVIQGATSKLARTLAAIRDQKEAAAA.

Belongs to the universal ribosomal protein uL10 family. As to quaternary structure, part of the ribosomal stalk of the 50S ribosomal subunit. The N-terminus interacts with L11 and the large rRNA to form the base of the stalk. The C-terminus forms an elongated spine to which L12 dimers bind in a sequential fashion forming a multimeric L10(L12)X complex.

Forms part of the ribosomal stalk, playing a central role in the interaction of the ribosome with GTP-bound translation factors. The protein is Large ribosomal subunit protein uL10 of Pseudomonas fluorescens (strain Pf0-1).